Consider the following 777-residue polypeptide: Zinc finger protein 786 (777 aa).

In terms of domain architecture, KRAB spans 9 to 80 (LTFEDVAIYF…WGEKKKPDKE (72 aa)). Residues 194–216 (NSCPVCRENSWEKNHLVKQQKGH) form a C2H2-type 1; degenerate zinc finger. Residues 240–262 (ISCLGCGKSFRLKQYLVRHLDIH) form a C2H2-type 2 zinc finger. A C2H2-type 3; degenerate zinc finger spans residues 268–291 (PQCPKCKMCFHHERTLFSHHLKNS). Residues 420 to 442 (VFCRKCGQGFTKHCGLTEHTRIL) form a C2H2-type 4; degenerate zinc finger. C2H2-type zinc fingers lie at residues 448 to 470 (FWCA…QRLH), 476 to 498 (FQCT…QLQH), 504 to 526 (FSCS…LRVH), 532 to 554 (FQCP…QRIH), 560 to 582 (FSCG…FRVH), 588 to 610 (FQCP…QRLH), 616 to 638 (FQCP…QLLH), 644 to 665 (FSCQ…MRTH), 671 to 693 (FQCP…QGLH), 699 to 721 (FHCP…QRIH), and 727 to 749 (FACG…IRVH).

This sequence belongs to the krueppel C2H2-type zinc-finger protein family.

It is found in the nucleus. In terms of biological role, may be involved in transcriptional regulation. This Mus musculus (Mouse) protein is Zinc finger protein 786 (Znf786).